A 177-amino-acid chain; its full sequence is Endoribonuclease YbeY (177 aa).

The Zn(2+) site is built by His118, His122, and His128.

This sequence belongs to the endoribonuclease YbeY family. Zn(2+) serves as cofactor.

The protein localises to the cytoplasm. Single strand-specific metallo-endoribonuclease involved in late-stage 70S ribosome quality control and in maturation of the 3' terminus of the 16S rRNA. This Mycobacterium bovis (strain ATCC BAA-935 / AF2122/97) protein is Endoribonuclease YbeY.